Reading from the N-terminus, the 342-residue chain is Anthranilate phosphoribosyltransferase (342 aa).

5-phospho-alpha-D-ribose 1-diphosphate is bound by residues G83, 86 to 87, T91, 93 to 96, 111 to 119, and S123; these read GD, NIST, and KHGGRSVSS. G83 provides a ligand contact to anthranilate. S95 contributes to the Mg(2+) binding site. An anthranilate-binding site is contributed by R169. Mg(2+) is bound by residues D228 and E229.

The protein belongs to the anthranilate phosphoribosyltransferase family. As to quaternary structure, homodimer. Requires Mg(2+) as cofactor.

It carries out the reaction N-(5-phospho-beta-D-ribosyl)anthranilate + diphosphate = 5-phospho-alpha-D-ribose 1-diphosphate + anthranilate. The protein operates within amino-acid biosynthesis; L-tryptophan biosynthesis; L-tryptophan from chorismate: step 2/5. Its function is as follows. Catalyzes the transfer of the phosphoribosyl group of 5-phosphorylribose-1-pyrophosphate (PRPP) to anthranilate to yield N-(5'-phosphoribosyl)-anthranilate (PRA). The polypeptide is Anthranilate phosphoribosyltransferase (Chromobacterium violaceum (strain ATCC 12472 / DSM 30191 / JCM 1249 / CCUG 213 / NBRC 12614 / NCIMB 9131 / NCTC 9757 / MK)).